We begin with the raw amino-acid sequence, 510 residues long: Ectonucleoside triphosphate diphosphohydrolase 1 (510 aa).

The Cytoplasmic portion of the chain corresponds to 1–16; that stretch reads MEDIKDSKVKRFCSKN. A helical transmembrane segment spans residues 17 to 37; that stretch reads ILIILGFTSILAVIALIAVGL. The Extracellular portion of the chain corresponds to 38–478; it reads TQNKPLPENV…SPPLPHSTYI (441 aa). Asn-73 is a glycosylation site (N-linked (GlcNAc...) asparagine). A disulfide bridge links Cys-84 with Cys-108. Glu-174 acts as the Proton acceptor in catalysis. N-linked (GlcNAc...) asparagine glycosylation is found at Asn-226, Asn-291, and Asn-333. 2 disulfide bridges follow: Cys-254-Cys-300 and Cys-281-Cys-324. 2 disulfides stabilise this stretch: Cys-337/Cys-342 and Cys-391/Cys-414. N-linked (GlcNAc...) asparagine glycosylation is found at Asn-428 and Asn-457. A helical membrane pass occupies residues 479 to 499; that stretch reads GLMVLFSLLLVAVAITGLFIY. Residues 500–510 lie on the Cytoplasmic side of the membrane; that stretch reads SKPSYFWKEAV.

It belongs to the GDA1/CD39 NTPase family. Homodimer; disulfide-linked. The cofactor is Ca(2+). Mg(2+) is required as a cofactor. N-glycosylated. In terms of processing, the N-terminus is blocked. Post-translationally, palmitoylated on Cys-13; which is required for caveola targeting.

It is found in the membrane. The protein resides in the caveola. It carries out the reaction a ribonucleoside 5'-triphosphate + 2 H2O = a ribonucleoside 5'-phosphate + 2 phosphate + 2 H(+). The catalysed reaction is a ribonucleoside 5'-triphosphate + H2O = a ribonucleoside 5'-diphosphate + phosphate + H(+). The enzyme catalyses a ribonucleoside 5'-diphosphate + H2O = a ribonucleoside 5'-phosphate + phosphate + H(+). It catalyses the reaction ATP + 2 H2O = AMP + 2 phosphate + 2 H(+). It carries out the reaction ATP + H2O = ADP + phosphate + H(+). The catalysed reaction is ADP + H2O = AMP + phosphate + H(+). The enzyme catalyses CTP + 2 H2O = CMP + 2 phosphate + 2 H(+). It catalyses the reaction CTP + H2O = CDP + phosphate + H(+). It carries out the reaction CDP + H2O = CMP + phosphate + H(+). The catalysed reaction is GTP + 2 H2O = GMP + 2 phosphate + 2 H(+). The enzyme catalyses GTP + H2O = GDP + phosphate + H(+). It catalyses the reaction GDP + H2O = GMP + phosphate + H(+). It carries out the reaction ITP + 2 H2O = IMP + 2 phosphate + 2 H(+). The catalysed reaction is ITP + H2O = IDP + phosphate + H(+). The enzyme catalyses IDP + H2O = IMP + phosphate + H(+). It catalyses the reaction UTP + 2 H2O = UMP + 2 phosphate + 2 H(+). It carries out the reaction UTP + H2O = UDP + phosphate + H(+). The catalysed reaction is UDP + H2O = UMP + phosphate + H(+). Its function is as follows. Catalyzes the hydrolysis of both di- and triphosphate nucleotides (NDPs and NTPs) and hydrolyze NTPs to nucleotide monophosphates (NMPs) in two distinct successive phosphate-releasing steps, with NDPs as intermediates and participates in the regulation of extracellular levels of nucleotides. By hydrolyzing proinflammatory ATP and platelet-activating ADP to AMP, it blocks platelet aggregation and supports blood flow. The polypeptide is Ectonucleoside triphosphate diphosphohydrolase 1 (Mus musculus (Mouse)).